We begin with the raw amino-acid sequence, 123 residues long: MPSTGTLVILFAIILILCIMLLFYYKTTEAGNPGVLPPPIPPPTPPPPKKKYDHNEYMEKTDLEPEVKKNHRKWANEAEHLISSSVKGLENLDETAFLANHKGHGFRTFEHAKSLFKEFLKKY.

Residues 5–25 (GTLVILFAIILILCIMLLFYY) form a helical membrane-spanning segment.

This sequence belongs to the asfivirus CP123L family.

Its subcellular location is the host membrane. It is found in the virion. This is an uncharacterized protein from Ornithodoros (relapsing fever ticks).